A 368-amino-acid polypeptide reads, in one-letter code: Germination protease (368 aa).

A propeptide spanning residues 1 to 16 is cleaved from the precursor; that stretch reads MKKSELDVNQYLIRTD.

The protein belongs to the peptidase A25 family. In terms of assembly, homotetramer. In terms of processing, autoproteolytically processed. The inactive tetrameric zymogen termed p46 autoprocesses to a smaller form termed p41, which is active only during spore germination.

The enzyme catalyses Endopeptidase action with P4 Glu or Asp, P1 preferably Glu &gt; Asp, P1' hydrophobic and P2' Ala.. Functionally, initiates the degradation of small, acid-soluble proteins during spore germination. The chain is Germination protease (gpr) from Bacillus subtilis (strain 168).